We begin with the raw amino-acid sequence, 110 residues long: Protein YcgL (110 aa).

The 85-residue stretch at 14-98 (MFCVIYRSSK…PPEDLLKQHL (85 aa)) folds into the YcgL domain.

The polypeptide is Protein YcgL (Salmonella arizonae (strain ATCC BAA-731 / CDC346-86 / RSK2980)).